An 84-amino-acid chain; its full sequence is Large ribosomal subunit protein bL27 (84 aa).

The segment at 1–21 (MAHKKGGGSTKNGRDSNPQYL) is disordered.

The protein belongs to the bacterial ribosomal protein bL27 family.

The protein is Large ribosomal subunit protein bL27 of Chloroherpeton thalassium (strain ATCC 35110 / GB-78).